Reading from the N-terminus, the 293-residue chain is 4-diphosphocytidyl-2-C-methyl-D-erythritol kinase (293 aa).

K16 is a catalytic residue. Residue 99–109 (PMGAGLGGGSS) coordinates ATP. The active site involves D141.

The protein belongs to the GHMP kinase family. IspE subfamily.

The enzyme catalyses 4-CDP-2-C-methyl-D-erythritol + ATP = 4-CDP-2-C-methyl-D-erythritol 2-phosphate + ADP + H(+). Its pathway is isoprenoid biosynthesis; isopentenyl diphosphate biosynthesis via DXP pathway; isopentenyl diphosphate from 1-deoxy-D-xylulose 5-phosphate: step 3/6. In terms of biological role, catalyzes the phosphorylation of the position 2 hydroxy group of 4-diphosphocytidyl-2C-methyl-D-erythritol. This chain is 4-diphosphocytidyl-2-C-methyl-D-erythritol kinase, found in Burkholderia cenocepacia (strain HI2424).